The following is a 435-amino-acid chain: MTQARCPALLIAAPASGQGKTTVTAALARLHARQGRRVRVFKCGPDFLDPMILARASGAPVYQLDLWMVGEAEARRLLARAAGEADLILIEGVMGLFDGNPSAADLARRFGVPVLGVINGAAMAQTFGALAYGLAHFQPDLPFSGVLGNRVGSQRHSDILRDCLPPGMRWFGGLPRSAEFELPSRHLGLVQAEELADLDARLDAAADALRASAETDLPEPVTFEVPAPAPLQRSLEGVRIGVARDASFAFLYQANLDLLRELGAELAFFSPLQDQALPAVDSLYLPGGYPELHLGRLQGNRAMAEAIRAHHAAGKPLLAECGGMLYLLDCLEDADGERGELLGLLPGRARLQKRLTALALQEVELPEGRLRGHTFHHSTLDCAVEPLARGVCPNGRNTAEAVFRLGRLTASYIHFYLPSNPQAAAALLAPARDAD.

Positions 239-422 (RIGVARDASF…IHFYLPSNPQ (184 aa)) constitute a GATase cobBQ-type domain. Cys-321 (nucleophile) is an active-site residue.

Belongs to the CobB/CbiA family. Requires Mg(2+) as cofactor.

It catalyses the reaction hydrogenobyrinate + 2 L-glutamine + 2 ATP + 2 H2O = hydrogenobyrinate a,c-diamide + 2 L-glutamate + 2 ADP + 2 phosphate + 2 H(+). Its pathway is cofactor biosynthesis; adenosylcobalamin biosynthesis; cob(II)yrinate a,c-diamide from precorrin-2 (aerobic route): step 9/10. Functionally, catalyzes the ATP-dependent amidation of the two carboxylate groups at positions a and c of hydrogenobyrinate, using either L-glutamine or ammonia as the nitrogen source. In Pseudomonas aeruginosa (strain ATCC 15692 / DSM 22644 / CIP 104116 / JCM 14847 / LMG 12228 / 1C / PRS 101 / PAO1), this protein is Hydrogenobyrinate a,c-diamide synthase.